The chain runs to 146 residues: Hemoglobin subunit beta (146 aa).

Valine 1 carries the N-acetylvaline modification. Residues 2-146 enclose the Globin domain; that stretch reads HLTAEEKNAI…VANALAHKYH (145 aa). Threonine 12 is subject to Phosphothreonine. The residue at position 59 (lysine 59) is an N6-acetyllysine. Histidine 63 lines the heme b pocket. An N6-acetyllysine modification is found at lysine 82. Histidine 92 contributes to the heme b binding site. An S-nitrosocysteine modification is found at cysteine 93. Lysine 144 carries the post-translational modification N6-acetyllysine.

The protein belongs to the globin family. As to quaternary structure, heterotetramer of two alpha chains and two beta chains. In terms of tissue distribution, red blood cells.

Its function is as follows. Involved in oxygen transport from the lung to the various peripheral tissues. In Osphranter rufus (Red kangaroo), this protein is Hemoglobin subunit beta (HBB).